Here is a 599-residue protein sequence, read N- to C-terminus: NADH-quinone oxidoreductase subunit C/D (599 aa).

Residues 1 to 189 (MTDLTTHDLA…DPFELTKQKE (189 aa)) form an NADH dehydrogenase I subunit C region. The tract at residues 213-599 (DFMFLNLGPN…IDFVMSDVDR (387 aa)) is NADH dehydrogenase I subunit D.

It in the N-terminal section; belongs to the complex I 30 kDa subunit family. The protein in the C-terminal section; belongs to the complex I 49 kDa subunit family. As to quaternary structure, NDH-1 is composed of 13 different subunits. Subunits NuoB, CD, E, F, and G constitute the peripheral sector of the complex.

Its subcellular location is the cell inner membrane. It catalyses the reaction a quinone + NADH + 5 H(+)(in) = a quinol + NAD(+) + 4 H(+)(out). NDH-1 shuttles electrons from NADH, via FMN and iron-sulfur (Fe-S) centers, to quinones in the respiratory chain. The immediate electron acceptor for the enzyme in this species is believed to be ubiquinone. Couples the redox reaction to proton translocation (for every two electrons transferred, four hydrogen ions are translocated across the cytoplasmic membrane), and thus conserves the redox energy in a proton gradient. The protein is NADH-quinone oxidoreductase subunit C/D of Pectobacterium atrosepticum (strain SCRI 1043 / ATCC BAA-672) (Erwinia carotovora subsp. atroseptica).